A 729-amino-acid polypeptide reads, in one-letter code: DNA replication licensing factor MCM5 (729 aa).

The region spanning 326–532 is the MCM domain; that stretch reads AYVKICSMIG…DQDKRIASHI (207 aa). An ATP-binding site is contributed by 376 to 383; it reads GDPSTAKS. The Arginine finger motif lies at 508-511; the sequence is SRFD.

It belongs to the MCM family. In terms of assembly, component of the minichromosome maintenance (MCM) complex, a heterotetramer composed of MCM2, MCM3, MCM4, MCM5, MCM6 and MCM7.

It localises to the nucleus. The catalysed reaction is ATP + H2O = ADP + phosphate + H(+). Functionally, probable component of the MCM2-7 complex (MCM complex) that may function as a DNA helicase and which is essential to undergo a single round of replication initiation and elongation per cell cycle in eukaryotic cells. The sequence is that of DNA replication licensing factor MCM5 (MCM5) from Oryza sativa subsp. indica (Rice).